Here is a 260-residue protein sequence, read N- to C-terminus: Type II methyltransferase M1.MboII (260 aa).

Residues Cys-12, Asp-30, Lys-197, 223-225 (SGT), and 241-242 (DM) contribute to the S-adenosyl-L-methionine site.

This sequence belongs to the N(4)/N(6)-methyltransferase family. In terms of assembly, at low concentration exists as a monomer and homodimer. Probably binds to DNA as a monomer.

The catalysed reaction is a 2'-deoxyadenosine in DNA + S-adenosyl-L-methionine = an N(6)-methyl-2'-deoxyadenosine in DNA + S-adenosyl-L-homocysteine + H(+). In terms of biological role, a beta subtype methylase that recognizes the double-stranded sequence 5'-GAAGA-3', methylates A-5 on the top strand, and protects the DNA from cleavage by the MboII endonuclease. It is not known if the cytosine of the complementary sequence TCTTC is also methylated by this enzyme. The polypeptide is Type II methyltransferase M1.MboII (Moraxella bovis).